A 152-amino-acid chain; its full sequence is Interleukin-3 (152 aa).

A signal peptide spans 1-19 (MSRLPVLLLLQLLVRPGLQ). Residues Asn-34 and Asn-89 are each glycosylated (N-linked (GlcNAc...) asparagine). A disulfide bridge connects residues Cys-35 and Cys-103.

Belongs to the IL-3 family. In terms of assembly, monomer. In terms of tissue distribution, activated T-cells, mast cells, natural killer cells.

The protein localises to the secreted. Functionally, granulocyte/macrophage colony-stimulating factors are cytokines that act in hematopoiesis by controlling the production, differentiation, and function of 2 related white cell populations of the blood, the granulocytes and the monocytes-macrophages. This CSF induces granulocytes, macrophages, mast cells, stem cells, erythroid cells, eosinophils and megakaryocytes. The polypeptide is Interleukin-3 (IL3) (Pan troglodytes (Chimpanzee)).